A 280-amino-acid polypeptide reads, in one-letter code: 4-diphosphocytidyl-2-C-methyl-D-erythritol kinase (280 aa).

Lys-8 is a catalytic residue. Position 91 to 101 (91 to 101) interacts with ATP; it reads PVSAGLAGGSS. Asp-133 is an active-site residue.

The protein belongs to the GHMP kinase family. IspE subfamily.

The catalysed reaction is 4-CDP-2-C-methyl-D-erythritol + ATP = 4-CDP-2-C-methyl-D-erythritol 2-phosphate + ADP + H(+). Its pathway is isoprenoid biosynthesis; isopentenyl diphosphate biosynthesis via DXP pathway; isopentenyl diphosphate from 1-deoxy-D-xylulose 5-phosphate: step 3/6. Its function is as follows. Catalyzes the phosphorylation of the position 2 hydroxy group of 4-diphosphocytidyl-2C-methyl-D-erythritol. The protein is 4-diphosphocytidyl-2-C-methyl-D-erythritol kinase of Clostridium novyi (strain NT).